Reading from the N-terminus, the 138-residue chain is Translation initiation factor 2 subunit beta (138 aa).

Belongs to the eIF-2-beta/eIF-5 family. Heterotrimer composed of an alpha, a beta and a gamma chain.

Functionally, eIF-2 functions in the early steps of protein synthesis by forming a ternary complex with GTP and initiator tRNA. The chain is Translation initiation factor 2 subunit beta from Methanococcus vannielii (strain ATCC 35089 / DSM 1224 / JCM 13029 / OCM 148 / SB).